We begin with the raw amino-acid sequence, 586 residues long: Phosphomethylpyrimidine synthase (586 aa).

The tract at residues 1–33 (MKQSVSAEQIELKSSLPGSKKVYVDGPREGMKV) is disordered. A compositionally biased stretch (basic and acidic residues) spans 22-33 (VYVDGPREGMKV). Substrate-binding positions include N193, M222, Y251, H287, 307-309 (SRG), 348-351 (DGLR), and E387. Zn(2+) is bound at residue H391. Position 414 (Y414) interacts with substrate. H455 serves as a coordination point for Zn(2+). [4Fe-4S] cluster contacts are provided by C535, C538, and C543.

The protein belongs to the ThiC family. The cofactor is [4Fe-4S] cluster.

The enzyme catalyses 5-amino-1-(5-phospho-beta-D-ribosyl)imidazole + S-adenosyl-L-methionine = 4-amino-2-methyl-5-(phosphooxymethyl)pyrimidine + CO + 5'-deoxyadenosine + formate + L-methionine + 3 H(+). It participates in cofactor biosynthesis; thiamine diphosphate biosynthesis. In terms of biological role, catalyzes the synthesis of the hydroxymethylpyrimidine phosphate (HMP-P) moiety of thiamine from aminoimidazole ribotide (AIR) in a radical S-adenosyl-L-methionine (SAM)-dependent reaction. In Bacillus cereus (strain G9842), this protein is Phosphomethylpyrimidine synthase.